The following is a 211-amino-acid chain: Glutathione S-transferase class-mu 28 kDa isozyme (211 aa).

The GST N-terminal domain occupies 4-86 (DHIKVIYFNG…YMAKKHHMMG (83 aa)). Glutathione contacts are provided by Tyr10, Arg16, Trp41, Lys45, Leu53, Glu70, Ser71, and Asp104. One can recognise a GST C-terminal domain in the interval 88–211 (TDEEYYNVEK…YLSDRAATPF (124 aa)).

The protein belongs to the GST superfamily. Mu family. Homodimer.

The catalysed reaction is RX + glutathione = an S-substituted glutathione + a halide anion + H(+). Conjugation of reduced glutathione to a wide number of exogenous and endogenous hydrophobic electrophiles. Its function is as follows. GST isoenzymes appear to play a central role in the parasite detoxification system. Other functions are also suspected including a role in increasing the solubility of haematin in the parasite gut. The sequence is that of Glutathione S-transferase class-mu 28 kDa isozyme from Schistosoma bovis (Blood fluke).